The chain runs to 567 residues: MKFTKLYVPTTKEAPKDATLPSHQFLIRAGFVAQIGSGLYNFLPLGKRVLRKVENIVRDEMDKAGANEVALSFVVPGELWKQSRRYFKFGKELLRLKDRKDNDFLLAPTHEESIVDLVRDKVTSYKQLPLHLYQIGLKFRDEARPRFGLLRCREFIMKDGYSFHASEADLKREFDLMETTYTKIFSRLGLNFRAVEADSGAIGGSGSKEFMVLAKNGEDDILISDASNYAANIEAAKRAKRVCKAERPQSNSMQKFFTPGCSSIAKVTEFFKVDPFYTIKAVMKKAIYEDSEKIVVFFVRGDDELQEVKACNACSALELSDASEEEVIAAGLVPGYCGPVGLHENIDFYIDNELENEKEMICGANEKDYHAIGVNIINFNKDRFKDLAEVKAGDKALDGGVLSVTKGIEVGHIFQLGVRYSETMGATFLDENGKSKPFFMGCYGIGVSRLVAVMVEASHDEKGCIWKKECAPFMVHIIVSNIKDTEQMQFALNLESNLESSGVEVLLDDRNERFGVKMADFELIGVPFGVVVGKGLQNAEVEFIKRDGLEKVKVSSDEILGKLKEII.

Belongs to the class-II aminoacyl-tRNA synthetase family. ProS type 1 subfamily. As to quaternary structure, homodimer.

It localises to the cytoplasm. It catalyses the reaction tRNA(Pro) + L-proline + ATP = L-prolyl-tRNA(Pro) + AMP + diphosphate. Functionally, catalyzes the attachment of proline to tRNA(Pro) in a two-step reaction: proline is first activated by ATP to form Pro-AMP and then transferred to the acceptor end of tRNA(Pro). As ProRS can inadvertently accommodate and process non-cognate amino acids such as alanine and cysteine, to avoid such errors it has two additional distinct editing activities against alanine. One activity is designated as 'pretransfer' editing and involves the tRNA(Pro)-independent hydrolysis of activated Ala-AMP. The other activity is designated 'posttransfer' editing and involves deacylation of mischarged Ala-tRNA(Pro). The misacylated Cys-tRNA(Pro) is not edited by ProRS. This Campylobacter fetus subsp. fetus (strain 82-40) protein is Proline--tRNA ligase.